A 1213-amino-acid polypeptide reads, in one-letter code: DNA-directed RNA polymerase subunit beta' (1213 aa).

Residues Cys-60, Cys-62, Cys-75, and Cys-78 each coordinate Zn(2+). Positions 450, 452, and 454 each coordinate Mg(2+). Residues Cys-819, Cys-893, Cys-900, and Cys-903 each contribute to the Zn(2+) site.

This sequence belongs to the RNA polymerase beta' chain family. The RNAP catalytic core consists of 2 alpha, 1 beta, 1 beta' and 1 omega subunit. When a sigma factor is associated with the core the holoenzyme is formed, which can initiate transcription. Mg(2+) serves as cofactor. The cofactor is Zn(2+).

It catalyses the reaction RNA(n) + a ribonucleoside 5'-triphosphate = RNA(n+1) + diphosphate. Its function is as follows. DNA-dependent RNA polymerase catalyzes the transcription of DNA into RNA using the four ribonucleoside triphosphates as substrates. The sequence is that of DNA-directed RNA polymerase subunit beta' from Streptococcus pyogenes serotype M18 (strain MGAS8232).